The following is a 354-amino-acid chain: Guanine nucleotide-binding protein alpha-12 subunit (354 aa).

Residues 31–354 (QPLKLLLLGS…SLLMNVAEIL (324 aa)) enclose the G-alpha domain. Residues 34-47 (KLLLLGSGECGKST) are G1 motif. GTP is bound by residues 39–46 (GSGECGKS), 178–184 (LRVRVKT), 203–207 (DVGGQ), 272–275 (NKID), and Ala329. Mg(2+)-binding residues include Ser46 and Thr184. Positions 176–184 (DFLRVRVKT) are G2 motif. A G3 motif region spans residues 199–208 (FKLVDVGGQK). The tract at residues 268-275 (VLFFNKID) is G4 motif. The interval 327–332 (TCALDS) is G5 motif.

This sequence belongs to the G-alpha family. G proteins are composed of 3 units; alpha, beta and gamma. The alpha chain contains the guanine nucleotide binding site.

Its function is as follows. Guanine nucleotide-binding proteins (G proteins) are involved as modulators or transducers in various transmembrane signaling systems. This Dictyostelium discoideum (Social amoeba) protein is Guanine nucleotide-binding protein alpha-12 subunit (gpaL).